The following is a 48-amino-acid chain: MRKKVVLSCEECKNRNYSTMKDTSSVERLEIKKFCKTCNKHTVHKETK.

This sequence belongs to the bacterial ribosomal protein bL33 family.

This is Large ribosomal subunit protein bL33A from Bacillus mycoides (strain KBAB4) (Bacillus weihenstephanensis).